The chain runs to 78 residues: Small ribosomal subunit protein bS18 (78 aa).

It belongs to the bacterial ribosomal protein bS18 family. Part of the 30S ribosomal subunit. Forms a tight heterodimer with protein bS6.

Binds as a heterodimer with protein bS6 to the central domain of the 16S rRNA, where it helps stabilize the platform of the 30S subunit. In Geobacillus kaustophilus (strain HTA426), this protein is Small ribosomal subunit protein bS18.